Consider the following 103-residue polypeptide: Small ribosomal subunit protein uS10 (103 aa).

It belongs to the universal ribosomal protein uS10 family. In terms of assembly, part of the 30S ribosomal subunit.

Its function is as follows. Involved in the binding of tRNA to the ribosomes. The polypeptide is Small ribosomal subunit protein uS10 (Xanthomonas campestris pv. campestris (strain B100)).